Consider the following 435-residue polypeptide: Elongation factor 1-alpha (435 aa).

The tr-type G domain occupies 4 to 227 (KPHLNLIVIG…YLDQLELPPK (224 aa)). A G1 region spans residues 13–20 (GHIDHGKS). 13 to 20 (GHIDHGKS) is a binding site for GTP. Serine 20 lines the Mg(2+) pocket. The tract at residues 69 to 73 (GVTIN) is G2. The interval 90–93 (DAPG) is G3. GTP is bound by residues 90–94 (DAPGH) and 152–155 (NKMD). The segment at 152–155 (NKMD) is G4. The tract at residues 193-195 (VAP) is G5.

The protein belongs to the TRAFAC class translation factor GTPase superfamily. Classic translation factor GTPase family. EF-Tu/EF-1A subfamily.

It localises to the cytoplasm. The enzyme catalyses GTP + H2O = GDP + phosphate + H(+). Its function is as follows. GTP hydrolase that promotes the GTP-dependent binding of aminoacyl-tRNA to the A-site of ribosomes during protein biosynthesis. The sequence is that of Elongation factor 1-alpha from Saccharolobus solfataricus (strain ATCC 35092 / DSM 1617 / JCM 11322 / P2) (Sulfolobus solfataricus).